Reading from the N-terminus, the 318-residue chain is Small ribosomal subunit biogenesis GTPase RsgA (318 aa).

The 165-residue stretch at 82–246 (RQDEIRTKSF…LIDSPGFQEF (165 aa)) folds into the CP-type G domain. GTP is bound by residues 132–135 (NKSD) and 186–194 (GPSGAGKST). The Zn(2+) site is built by Cys-270, Cys-275, His-277, and Cys-283.

Belongs to the TRAFAC class YlqF/YawG GTPase family. RsgA subfamily. As to quaternary structure, monomer. Associates with 30S ribosomal subunit, binds 16S rRNA. Zn(2+) serves as cofactor.

The protein localises to the cytoplasm. One of several proteins that assist in the late maturation steps of the functional core of the 30S ribosomal subunit. Helps release RbfA from mature subunits. May play a role in the assembly of ribosomal proteins into the subunit. Circularly permuted GTPase that catalyzes slow GTP hydrolysis, GTPase activity is stimulated by the 30S ribosomal subunit. In Variovorax paradoxus (strain S110), this protein is Small ribosomal subunit biogenesis GTPase RsgA.